Consider the following 293-residue polypeptide: Decaprenyl diphosphate synthase (293 aa).

The segment at 1-24 (MATTRGKKTYPQLPPAPDDYPTFP) is disordered. The active site involves Asp-73. Position 73 (Asp-73) interacts with Mg(2+). Substrate-binding positions include 74-77 (GNGR), Trp-78, Arg-86, His-90, and 118-120 (STE). The active-site Proton acceptor is Asn-121. Substrate-binding positions include Trp-122, Arg-124, Arg-241, and 247–249 (RAS). Glu-260 contacts Mg(2+).

Belongs to the UPP synthase family. As to quaternary structure, homodimer. Requires Mg(2+) as cofactor.

It is found in the cell membrane. It carries out the reaction (2Z,6E)-farnesyl diphosphate + 7 isopentenyl diphosphate = (2Z,6Z,10Z,14Z,18Z,22Z,26Z,30Z,34E)-decaprenyl diphosphate + 7 diphosphate. The catalysed reaction is n isopentenyl diphosphate + (2E,6E)-farnesyl diphosphate = a di-trans,poly-cis-polyprenyl diphosphate + n diphosphate. Functionally, catalyzes the sequential condensation of isopentenyl diphosphate (IPP) in the cis configuration with (2Z,6E)-farnesyl diphosphate (Z-FPP or EZ-FPP) generating the 50 carbon product trans,polycis-decaprenyl diphosphate. When (2E,6E)-farnesyl diphosphate (E-FPP or EE-FPP) is used in vitro, both primary products decaprenyl diphosphate and heptaprenyl diphosphate are synthesized. It is probably due to the fact that M.smegmatis synthesizes both (2E,6E,10E)-geranylgeranyl diphosphate (EEE-GGPP) and (2E,6E,10Z)-geranylgeranyl diphosphate (EEZ-GGPP). Can also accept many different allylic substrates, including E-geranyl diphosphate (E-GPP), neryl diphosphate (NPP), and all-trans-geranyl-geranyl diphosphate. In Mycolicibacterium smegmatis (strain ATCC 700084 / mc(2)155) (Mycobacterium smegmatis), this protein is Decaprenyl diphosphate synthase (uppS).